A 430-amino-acid polypeptide reads, in one-letter code: Enolase (430 aa).

Gln167 lines the (2R)-2-phosphoglycerate pocket. Glu209 (proton donor) is an active-site residue. The Mg(2+) site is built by Asp246, Glu287, and Asp314. Positions 339, 368, 369, and 390 each coordinate (2R)-2-phosphoglycerate. The Proton acceptor role is filled by Lys339.

It belongs to the enolase family. Mg(2+) is required as a cofactor.

The protein resides in the cytoplasm. It localises to the secreted. The protein localises to the cell surface. The catalysed reaction is (2R)-2-phosphoglycerate = phosphoenolpyruvate + H2O. Its pathway is carbohydrate degradation; glycolysis; pyruvate from D-glyceraldehyde 3-phosphate: step 4/5. Functionally, catalyzes the reversible conversion of 2-phosphoglycerate (2-PG) into phosphoenolpyruvate (PEP). It is essential for the degradation of carbohydrates via glycolysis. This Prochlorococcus marinus (strain MIT 9312) protein is Enolase.